The sequence spans 215 residues: MKLFIDTANVDEIRKANDMGIICGVTTNPSLIAKEGRNFKEVVKEITDIVDGPISAEVISLEWKEMVKEARELVKIHKNIVIKIPMTQEGLKAVKVLSQEEIKTNVTLIFSAAQALLAAKAGASYVSPFLGRLDDVGMDGIKLIEEIVTIFKVQNIVTEIIAASIRGPIHVVKCAALGSHIATVPYKVLVQMCKHPLTDIGIERFLKDWESVPDK.

Residue Lys-83 is the Schiff-base intermediate with substrate of the active site.

It belongs to the transaldolase family. Type 3B subfamily.

The protein resides in the cytoplasm. The catalysed reaction is D-sedoheptulose 7-phosphate + D-glyceraldehyde 3-phosphate = D-erythrose 4-phosphate + beta-D-fructose 6-phosphate. Its pathway is carbohydrate degradation; pentose phosphate pathway; D-glyceraldehyde 3-phosphate and beta-D-fructose 6-phosphate from D-ribose 5-phosphate and D-xylulose 5-phosphate (non-oxidative stage): step 2/3. Functionally, transaldolase is important for the balance of metabolites in the pentose-phosphate pathway. In Clostridium kluyveri (strain NBRC 12016), this protein is Probable transaldolase.